An 88-amino-acid polypeptide reads, in one-letter code: Small ribosomal subunit protein uS17 (88 aa).

The protein belongs to the universal ribosomal protein uS17 family. Part of the 30S ribosomal subunit.

In terms of biological role, one of the primary rRNA binding proteins, it binds specifically to the 5'-end of 16S ribosomal RNA. This chain is Small ribosomal subunit protein uS17, found in Lactobacillus delbrueckii subsp. bulgaricus (strain ATCC 11842 / DSM 20081 / BCRC 10696 / JCM 1002 / NBRC 13953 / NCIMB 11778 / NCTC 12712 / WDCM 00102 / Lb 14).